We begin with the raw amino-acid sequence, 411 residues long: Multifunctional CCA protein (411 aa).

Positions 8 and 11 each coordinate ATP. Residues Gly8 and Arg11 each contribute to the CTP site. Residues Asp21 and Asp23 each contribute to the Mg(2+) site. Residues Arg91, Arg143, and Arg146 each contribute to the ATP site. Residues Arg91, Arg143, and Arg146 each contribute to the CTP site. The HD domain occupies 232-333 (TGVHVMMVID…MRLLERCDAL (102 aa)).

It belongs to the tRNA nucleotidyltransferase/poly(A) polymerase family. Bacterial CCA-adding enzyme type 1 subfamily. Monomer. Can also form homodimers and oligomers. It depends on Mg(2+) as a cofactor. Ni(2+) serves as cofactor.

The catalysed reaction is a tRNA precursor + 2 CTP + ATP = a tRNA with a 3' CCA end + 3 diphosphate. It carries out the reaction a tRNA with a 3' CCA end + 2 CTP + ATP = a tRNA with a 3' CCACCA end + 3 diphosphate. In terms of biological role, catalyzes the addition and repair of the essential 3'-terminal CCA sequence in tRNAs without using a nucleic acid template. Adds these three nucleotides in the order of C, C, and A to the tRNA nucleotide-73, using CTP and ATP as substrates and producing inorganic pyrophosphate. tRNA 3'-terminal CCA addition is required both for tRNA processing and repair. Also involved in tRNA surveillance by mediating tandem CCA addition to generate a CCACCA at the 3' terminus of unstable tRNAs. While stable tRNAs receive only 3'-terminal CCA, unstable tRNAs are marked with CCACCA and rapidly degraded. This chain is Multifunctional CCA protein, found in Cupriavidus necator (strain ATCC 17699 / DSM 428 / KCTC 22496 / NCIMB 10442 / H16 / Stanier 337) (Ralstonia eutropha).